A 385-amino-acid polypeptide reads, in one-letter code: Succinate--CoA ligase [ADP-forming] subunit beta (385 aa).

Residues 9–244 form the ATP-grasp domain; the sequence is KEILRKYGVP…QDEEDPLETR (236 aa). ATP is bound by residues lysine 46, 53 to 55, glutamate 99, cysteine 102, and glutamate 107; that span reads GRG. Residues asparagine 199 and aspartate 213 each coordinate Mg(2+). Substrate-binding positions include asparagine 264 and 321-323; that span reads GIM.

Belongs to the succinate/malate CoA ligase beta subunit family. As to quaternary structure, heterotetramer of two alpha and two beta subunits. It depends on Mg(2+) as a cofactor.

It catalyses the reaction succinate + ATP + CoA = succinyl-CoA + ADP + phosphate. It carries out the reaction GTP + succinate + CoA = succinyl-CoA + GDP + phosphate. It participates in carbohydrate metabolism; tricarboxylic acid cycle; succinate from succinyl-CoA (ligase route): step 1/1. Its function is as follows. Succinyl-CoA synthetase functions in the citric acid cycle (TCA), coupling the hydrolysis of succinyl-CoA to the synthesis of either ATP or GTP and thus represents the only step of substrate-level phosphorylation in the TCA. The beta subunit provides nucleotide specificity of the enzyme and binds the substrate succinate, while the binding sites for coenzyme A and phosphate are found in the alpha subunit. In Rickettsia bellii (strain RML369-C), this protein is Succinate--CoA ligase [ADP-forming] subunit beta.